The chain runs to 1940 residues: Protein ORF1940 (1940 aa).

TPR repeat units follow at residues 119–153 (IKACSNAQCSPETVESNFQEAIRDYEAASSIALQY), 155–186 (FQSLAEQLSDAVNQLKTALSNYEKTVATLQQI), 480–513 (RLPDIRIGAIDAAKEKIGDLMSDFKEKISIGLHG), and 617–652 (GKSMGDKTVLTADYMEGEVLGLIKNYEADVKISPTS). 2 disordered regions span residues 1160–1239 (PSKV…PGAV) and 1519–1571 (KGPS…TVTS). Positions 1164 to 1185 (QNTTQPSATQNTTTQPTAQNTS) are enriched in low complexity. The span at 1186–1200 (LPGATQNTTLPTPSK) shows a compositional bias: polar residues. 3 stretches are compositionally biased toward low complexity: residues 1201–1235 (VQNTTQPSTTPNTTLSTPSTTPNTTTQPTVQNTSL), 1521–1539 (PSTTQNTTQPSTTPNMTPP), and 1561–1571 (TPGSGSQTVTS). Residues 1691–1724 (KDLNKSVGTSVVEEAKYNSTLQTYLAGLGIKDLN) form a TPR 5 repeat. Positions 1862–1940 (TTTHHITPPP…AEQAEQVLLI (79 aa)) are disordered. Residues 1868–1883 (TPPPPPPPPPPPPPPK) are compositionally biased toward pro residues. The segment covering 1884–1894 (TQTITTTTQIT) has biased composition (low complexity). Over residues 1895–1912 (PPSPPPTPPPPPPPPKSP) the composition is skewed to pro residues.

This Acidianus convivator (ATV) protein is Protein ORF1940.